The sequence spans 535 residues: Phosphoenolpyruvate carboxykinase (ATP) (535 aa).

Residues R59, Y201, and K207 each contribute to the substrate site. Residues K207, H226, and 243–251 (GLSGTGKTT) contribute to the ATP site. Residues K207 and H226 each coordinate Mn(2+). D264 provides a ligand contact to Mn(2+). Residues E292, R328, 444–445 (RI), and T450 contribute to the ATP site. Substrate is bound at residue R328.

It belongs to the phosphoenolpyruvate carboxykinase (ATP) family. The cofactor is Mn(2+).

It is found in the cytoplasm. The catalysed reaction is oxaloacetate + ATP = phosphoenolpyruvate + ADP + CO2. The protein operates within carbohydrate biosynthesis; gluconeogenesis. Involved in the gluconeogenesis. Catalyzes the conversion of oxaloacetate (OAA) to phosphoenolpyruvate (PEP) through direct phosphoryl transfer between the nucleoside triphosphate and OAA. The protein is Phosphoenolpyruvate carboxykinase (ATP) of Parabacteroides distasonis (strain ATCC 8503 / DSM 20701 / CIP 104284 / JCM 5825 / NCTC 11152).